A 198-amino-acid chain; its full sequence is Recombination protein RecR (198 aa).

Residues 56-71 form a C4-type zinc finger; it reads CTECRDFSETKICAIC. Residues 79–174 form the Toprim domain; that stretch reads HQLCVVESPP…RPSRLAQGLP (96 aa).

This sequence belongs to the RecR family.

In terms of biological role, may play a role in DNA repair. It seems to be involved in an RecBC-independent recombinational process of DNA repair. It may act with RecF and RecO. This Xylella fastidiosa (strain 9a5c) protein is Recombination protein RecR.